Here is a 716-residue protein sequence, read N- to C-terminus: Polyribonucleotide nucleotidyltransferase (716 aa).

Mg(2+) is bound by residues D493 and D499. One can recognise a KH domain in the interval 560 to 619 (PRMITIKINPEKIRDVIGKGGSVIRALTEETGTTIDISDDGVVTIASTSSEGMAEAKKRI). The region spanning 629 to 697 (GQVYEGTVLK…EKGRVRLSAK (69 aa)) is the S1 motif domain.

Belongs to the polyribonucleotide nucleotidyltransferase family. Mg(2+) serves as cofactor.

The protein localises to the cytoplasm. The catalysed reaction is RNA(n+1) + phosphate = RNA(n) + a ribonucleoside 5'-diphosphate. Involved in mRNA degradation. Catalyzes the phosphorolysis of single-stranded polyribonucleotides processively in the 3'- to 5'-direction. This Paraburkholderia xenovorans (strain LB400) protein is Polyribonucleotide nucleotidyltransferase.